A 241-amino-acid chain; its full sequence is Probable FKBP-type peptidyl-prolyl cis-trans isomerase (241 aa).

The region spanning 150 to 241 is the PPIase FKBP-type domain; it reads TDTVKVHYTG…VLDVNPKSEK (92 aa).

It belongs to the FKBP-type PPIase family.

It carries out the reaction [protein]-peptidylproline (omega=180) = [protein]-peptidylproline (omega=0). Its function is as follows. PPIases accelerate the folding of proteins. It catalyzes the cis-trans isomerization of proline imidic peptide bonds in oligopeptides. This Haemophilus influenzae (strain ATCC 51907 / DSM 11121 / KW20 / Rd) protein is Probable FKBP-type peptidyl-prolyl cis-trans isomerase.